Reading from the N-terminus, the 1258-residue chain is Phosphatidylinositol 3,4,5-trisphosphate 5-phosphatase 2 (1258 aa).

In terms of domain architecture, SH2 spans 21–117 (WYHRDLSRAA…GLVCALLLPV (97 aa)). Basic and acidic residues predominate over residues 119-132 (GEREPDPPDDRDAS). The disordered stretch occupies residues 119–180 (GEREPDPPDD…AESAPNGLST (62 aa)). S132 carries the post-translational modification Phosphoserine. Over residues 145-155 (SGSTSISAPTG) the composition is skewed to polar residues. Over residues 156-166 (PSSPLPAPETP) the composition is skewed to pro residues. T165 is modified (phosphothreonine). S241 and S352 each carry phosphoserine. The residue at position 886 (Y886) is a Phosphotyrosine. Residue S890 is modified to Phosphoserine. Residues 897 to 1118 (GAKSKAPSVS…FLGEVASGDD (222 aa)) are disordered. The segment covering 938–950 (PPPTGRPPAPPRA) has biased composition (pro residues). The SH3-binding signature appears at 944-949 (PPAPPR). Residues 951–965 (APREEPLTPRLKPEG) are compositionally biased toward basic and acidic residues. T958 bears the Phosphothreonine mark. An NPXY motif motif is present at residues 983–986 (NPAY). A Phosphotyrosine; by SRC modification is found at Y986. Pro residues-rich tracts occupy residues 996–1007 (LLPPEPPSPARA), 1048–1059 (LPPPDFPPPPLP), and 1087–1104 (GPPP…PGPS). S1131 carries the phosphoserine modification. Residues Y1135 and Y1162 each carry the phosphotyrosine modification. In terms of domain architecture, SAM spans 1196 to 1258 (LGEAGMSAWL…LLLDTLQLSK (63 aa)). S1257 bears the Phosphoserine mark.

It belongs to the inositol 1,4,5-trisphosphate 5-phosphatase family. In terms of assembly, interacts with tyrosine phosphorylated form of SHC1. Interacts with EGFR. Upon stimulation by the EGF signaling pathway, it forms a complex with SHC1 and EGFR. Interacts with cytoskeletal protein SORBS3/vinexin, promoting its localization to the periphery of cells. Forms a complex with filamin (FLNA or FLNB), actin, GPIb (GP1BA or GP1BB) that regulates cortical and submembraneous actin. Interacts with c-Met/MET, when c-Met/MET is phosphorylated on 'Tyr-1356'. Interacts with p130Cas/BCAR1. Interacts with CENTD3/ARAP3 via its SAM domain. Interacts with c-Cbl/CBL and CAP/SORBS1. Interacts with activated EPHA2 receptor. Interacts with receptor FCGR2A. Interacts with receptor FCGR2B. Interacts with tyrosine kinase ABL1. Interacts with tyrosine kinase TEC. Interacts with CSF1R. Interacts (via N-terminus) with SH3YL1 (via SH3 domain). Interacts with FCRL6 (tyrosine phosphorylated form). Interacts (via SH2 domain) with tyrosine phosphorylated KLRC1 (via ITIM). Interacts with NEDD9/HEF1. Tyrosine phosphorylated by the members of the SRC family after exposure to a diverse array of extracellular stimuli such as insulin, growth factors such as EGF or PDGF, chemokines, integrin ligands and hypertonic and oxidative stress. May be phosphorylated upon IgG receptor FCGR2B-binding. Phosphorylated at Tyr-986 following cell attachment and spreading. Phosphorylated at Tyr-1162 following EGF signaling pathway stimulation. Phosphorylated at Thr-958 in response to PDGF. In terms of tissue distribution, widely expressed, most prominently in skeletal muscle, heart and brain. Present in platelets. Expressed in transformed myeloid cells and in primary macrophages, but not in peripheral blood monocytes.

The protein resides in the cytoplasm. The protein localises to the cytosol. It localises to the cytoskeleton. Its subcellular location is the membrane. It is found in the cell projection. The protein resides in the filopodium. The protein localises to the lamellipodium. It localises to the basal cell membrane. Its subcellular location is the nucleus. It is found in the nucleus speckle. The protein resides in the spindle pole. The catalysed reaction is a 1,2-diacyl-sn-glycero-3-phospho-(1D-myo-inositol-3,4,5-trisphosphate) + H2O = a 1,2-diacyl-sn-glycero-3-phospho-(1D-myo-inositol-3,4-bisphosphate) + phosphate. The enzyme catalyses 1,2-dioctanoyl-sn-glycero-3-phospho-(1D-myo-inositol-3,4,5-trisphosphate) + H2O = 1,2-dioctanoyl-sn-glycero-3-phospho-(1D-myo-inositol-3,4-bisphosphate) + phosphate. It carries out the reaction 1,2-dihexadecanoyl-sn-glycero-3-phospho-(1D-myo-inositol-3,4,5-trisphosphate) + H2O = 1,2-dihexadecanoyl-sn-glycero-3-phospho-(1D-myo-inositol-3,4-bisphosphate) + phosphate. Its activity is regulated as follows. Activated upon translocation to the sites of synthesis of PtdIns(3,4,5)P3 in the membrane. Enzymatic activity is enhanced in the presence of phosphatidylserine. In terms of biological role, phosphatidylinositol (PtdIns) phosphatase that specifically hydrolyzes the 5-phosphate of phosphatidylinositol-3,4,5-trisphosphate (PtdIns(3,4,5)P3) to produce PtdIns(3,4)P2, thereby negatively regulating the PI3K (phosphoinositide 3-kinase) pathways. Required for correct mitotic spindle orientation and therefore progression of mitosis. Plays a central role in regulation of PI3K-dependent insulin signaling, although the precise molecular mechanisms and signaling pathways remain unclear. While overexpression reduces both insulin-stimulated MAP kinase and Akt activation, its absence does not affect insulin signaling or GLUT4 trafficking. Confers resistance to dietary obesity. May act by regulating AKT2, but not AKT1, phosphorylation at the plasma membrane. Part of a signaling pathway that regulates actin cytoskeleton remodeling. Required for the maintenance and dynamic remodeling of actin structures as well as in endocytosis, having a major impact on ligand-induced EGFR internalization and degradation. Participates in regulation of cortical and submembraneous actin by hydrolyzing PtdIns(3,4,5)P3 thereby regulating membrane ruffling. Regulates cell adhesion and cell spreading. Required for HGF-mediated lamellipodium formation, cell scattering and spreading. Acts as a negative regulator of EPHA2 receptor endocytosis by inhibiting via PI3K-dependent Rac1 activation. Acts as a regulator of neuritogenesis by regulating PtdIns(3,4,5)P3 level and is required to form an initial protrusive pattern, and later, maintain proper neurite outgrowth. Acts as a negative regulator of the FC-gamma-RIIA receptor (FCGR2A). Mediates signaling from the FC-gamma-RIIB receptor (FCGR2B), playing a central role in terminating signal transduction from activating immune/hematopoietic cell receptor systems. Involved in EGF signaling pathway. Upon stimulation by EGF, it is recruited by EGFR and dephosphorylates PtdIns(3,4,5)P3. Plays a negative role in regulating the PI3K-PKB pathway, possibly by inhibiting PKB activity. Down-regulates Fc-gamma-R-mediated phagocytosis in macrophages independently of INPP5D/SHIP1. In macrophages, down-regulates NF-kappa-B-dependent gene transcription by regulating macrophage colony-stimulating factor (M-CSF)-induced signaling. Plays a role in the localization of AURKA and NEDD9/HEF1 to the basolateral membrane at interphase in polarized cysts, thereby mediates cell cycle homeostasis, cell polarization and cilia assembly. Additionally promotion of cilia growth is also facilitated by hydrolysis of (PtdIns(3,4,5)P3) to PtdIns(3,4)P2. Promotes formation of apical membrane-initiation sites during the initial stages of lumen formation via Rho family-induced actin filament organization and CTNNB1 localization to cell-cell contacts. May also hydrolyze PtdIns(1,3,4,5)P4, and could thus affect the levels of the higher inositol polyphosphates like InsP6. Involved in endochondral ossification. This is Phosphatidylinositol 3,4,5-trisphosphate 5-phosphatase 2 from Homo sapiens (Human).